Reading from the N-terminus, the 297-residue chain is tRNA dimethylallyltransferase (297 aa).

8-15 (GATASGKS) serves as a coordination point for ATP. Residue 10-15 (TASGKS) participates in substrate binding. An interaction with substrate tRNA region spans residues 33-36 (DSLS).

Belongs to the IPP transferase family. As to quaternary structure, monomer. Mg(2+) is required as a cofactor.

It catalyses the reaction adenosine(37) in tRNA + dimethylallyl diphosphate = N(6)-dimethylallyladenosine(37) in tRNA + diphosphate. Functionally, catalyzes the transfer of a dimethylallyl group onto the adenine at position 37 in tRNAs that read codons beginning with uridine, leading to the formation of N6-(dimethylallyl)adenosine (i(6)A). In Sulfurimonas denitrificans (strain ATCC 33889 / DSM 1251) (Thiomicrospira denitrificans (strain ATCC 33889 / DSM 1251)), this protein is tRNA dimethylallyltransferase.